A 414-amino-acid chain; its full sequence is MSLEMFDKEIFDLTNKELERQCEGLEMIASENFTLPEVMEVMGSILTNKYAEGYPGKRYYGGCEFVDEIETLAIERCKKLFNCKFANVQPNSGSQANQGVYAALINPGDKILGMDLSHGGHLTHGAKVSSSGKMYESCFYGVELDGRIDYEKVREIAKKEKPKLIVCGASAYARVIDFAKFREIADEVGAYLFADIAHIAGLVVAGEHPSPFPHAHVVSSTTHKTLRGPRGGIIMTNDEELAKKINSAIFPGIQGGPLMHVIAAKAVGFKFNLSDEWKVYAKQVRTNAQVLANVLMDRKFKLVSDGTDNHLVLMSFLDREFSGKDADLALGNAGITANKNTVPGEIRSPFITSGLRLGTPALTARGFKEKEMEIVSNYIADILDDVNNEKLQKNIKQELKKLASNFIIYERAMF.

Residues L116 and 120–122 contribute to the (6S)-5,6,7,8-tetrahydrofolate site; that span reads GHL. At K224 the chain carries N6-(pyridoxal phosphate)lysine. (6S)-5,6,7,8-tetrahydrofolate-binding positions include E240 and 348 to 350; that span reads SPF.

This sequence belongs to the SHMT family. As to quaternary structure, homodimer. It depends on pyridoxal 5'-phosphate as a cofactor.

Its subcellular location is the cytoplasm. The catalysed reaction is (6R)-5,10-methylene-5,6,7,8-tetrahydrofolate + glycine + H2O = (6S)-5,6,7,8-tetrahydrofolate + L-serine. The protein operates within one-carbon metabolism; tetrahydrofolate interconversion. Its pathway is amino-acid biosynthesis; glycine biosynthesis; glycine from L-serine: step 1/1. Its function is as follows. Catalyzes the reversible interconversion of serine and glycine with tetrahydrofolate (THF) serving as the one-carbon carrier. This reaction serves as the major source of one-carbon groups required for the biosynthesis of purines, thymidylate, methionine, and other important biomolecules. Also exhibits THF-independent aldolase activity toward beta-hydroxyamino acids, producing glycine and aldehydes, via a retro-aldol mechanism. This chain is Serine hydroxymethyltransferase, found in Campylobacter jejuni (strain RM1221).